Here is a 108-residue protein sequence, read N- to C-terminus: uncharacterized protein (108 aa).

This is an uncharacterized protein from Treponema pallidum (strain Nichols).